The primary structure comprises 1002 residues: Mitogen-activated protein kinase kinase kinase 21 (1002 aa).

The segment at 1–26 (MALPVAEGTADTPLSPARDDSGSTSS) is disordered. The 65-residue stretch at 24–88 (TSSGMWAALY…PASYVAPCGP (65 aa)) folds into the SH3 domain. The Protein kinase domain occupies 110–390 (LELKELIGAG…QLTAIEEAVL (281 aa)). ATP is bound by residues 116–124 (IGAGGFGQV) and Lys137. The Proton acceptor role is filled by Asp247. The residue at position 283 (Thr283) is a Phosphothreonine; by autocatalysis. At Ser287 the chain carries Phosphoserine; by autocatalysis and MAP4K1. Leucine-zipper stretches follow at residues 409 to 430 (IQQM…EEEL) and 444 to 466 (LRRR…LNVL). Disordered regions lie at residues 508–531 (TVQA…PPGS), 574–604 (GCTW…NSPW), 640–689 (HRKP…VGAP), 721–778 (AQAP…SHSS), 797–823 (LGNA…SGCE), and 878–899 (QSAP…RDLA). Ser512, Ser527, and Ser531 each carry phosphoserine. Phosphothreonine is present on Thr576. A compositionally biased stretch (basic and acidic residues) spans 584-596 (TKERPEGRERVRP). Ser598 carries the post-translational modification Phosphoserine. Positions 661 to 677 (DSQREDSSEAESREEGS) are enriched in basic and acidic residues. 2 stretches are compositionally biased toward low complexity: residues 740–758 (QPAS…QPSA) and 766–778 (STLL…SHSS).

The protein belongs to the protein kinase superfamily. STE Ser/Thr protein kinase family. MAP kinase kinase kinase subfamily. As to quaternary structure, homodimer. Interacts with TLR4. Requires Mg(2+) as cofactor. Autophosphorylation on serine and threonine residues within the activation loop plays a role in enzyme activation.

It catalyses the reaction L-seryl-[protein] + ATP = O-phospho-L-seryl-[protein] + ADP + H(+). The enzyme catalyses L-threonyl-[protein] + ATP = O-phospho-L-threonyl-[protein] + ADP + H(+). Its activity is regulated as follows. Homodimerization via the leucine zipper domains is required for autophosphorylation and subsequent activation. In terms of biological role, negative regulator of TLR4 signaling. Does not activate JNK1/MAPK8 pathway, p38/MAPK14, nor ERK2/MAPK1 pathways. The chain is Mitogen-activated protein kinase kinase kinase 21 (Map3k21) from Mus musculus (Mouse).